Here is a 437-residue protein sequence, read N- to C-terminus: F-box only protein 9 (437 aa).

The disordered stretch occupies residues 1 to 26 (MSAEAEEDCHSDADRVGDEGNESPAE). Serine 2 carries the N-acetylalanine modification. The span at 8 to 26 (DCHSDADRVGDEGNESPAE) shows a compositional bias: basic and acidic residues. The residue at position 10 (histidine 10) is a Phosphoserine. Residues 84 to 117 (ARELFLQAVEEEQNGALYEAIKFYRRAMQLVPDI) form a TPR repeat. The residue at position 126 (serine 126) is a Phosphoserine. An F-box domain is found at 175-226 (QTHISVLPMEVLMYIFRWVVSSDLDLRSLEQLSLVCRGFYICARDPEIWRLA).

As to quaternary structure, part of the SCF (SKP1-CUL1-F-box) E3 ubiquitin-protein ligase complex SCF(FBXO9) composed of CUL1, SKP1, RBX1 and FBXO9. Interacts with TTI1 and TELO2; when TTI1 and TELO2 are phosphorylated by CK2.

The protein resides in the cytoplasm. It functions in the pathway protein modification; protein ubiquitination. Functionally, substrate recognition component of a SCF (SKP1-CUL1-F-box protein) E3 ubiquitin-protein ligase complex which mediates the ubiquitination and subsequent proteasomal degradation of target proteins and plays a role in several biological processes such as cell cycle, cell proliferation, or maintenance of chromosome stability. Ubiquitinates mTORC1-bound TTI1 and TELO2 when they are phosphorylated by CK2 following growth factor deprivation, leading to their degradation. In contrast, does not mediate ubiquitination of TTI1 and TELO2 when they are part of the mTORC2 complex. As a consequence, mTORC1 is inactivated to restrain cell growth and protein translation, while mTORC2 is the activated due to the relief of feedback inhibition by mTORC1. Plays a role in maintaining epithelial cell survival by regulating the turn-over of chromatin modulator PRMT4 through ubiquitination and degradation by the proteasomal pathway. Also regulates PPARgamma stability by facilitating PPARgamma/PPARG ubiquitination and thereby plays a role in adipocyte differentiation. This Mus musculus (Mouse) protein is F-box only protein 9 (Fbxo9).